Reading from the N-terminus, the 600-residue chain is DDB1- and CUL4-associated factor 15 (600 aa).

The disordered stretch occupies residues 1–30 (MAPSSKSERNSGAGSGGGGPGGAGGKRAAG). The span at 13-27 (AGSGGGGPGGAGGKR) shows a compositional bias: gly residues. S50 carries the phosphoserine modification. Zn(2+) is bound by residues C193, C196, C211, and H214. Residues F231 and 234 to 235 (AF) contribute to the E7820 site. Residues 280–295 (PASPPEPQSPELPPAL) are compositionally biased toward pro residues. The segment at 280-316 (PASPPEPQSPELPPALPSFCPEAAPARSSGSPEPSPA) is disordered. Phosphoserine occurs at positions 310 and 314.

Component of the DCX(DCAF15) complex, also named CLR4(DCAF15) complex, composed of DCAF15, DDB1, cullin-4 (CUL4A or CUL4B), DDA1 and RBX1.

It functions in the pathway protein modification; protein ubiquitination. Its activity is regulated as follows. Aryl sulfonamide anticancer drugs change the substrate specificity of DCAF15 by acting as a molecular glue that promotes binding between DCAF15 and weak affinity interactors, such as RBM39. Its function is as follows. Substrate-recognition component of the DCX(DCAF15) complex, a cullin-4-RING E3 ubiquitin-protein ligase complex that mediates ubiquitination and degradation of target proteins. The DCX(DCAF15) complex acts as a regulator of the natural killer (NK) cells effector functions, possibly by mediating ubiquitination and degradation of cohesin subunits SMC1A and SMC3. May play a role in the activation of antigen-presenting cells (APC) and their interaction with NK cells. Functionally, binding of aryl sulfonamide anticancer drugs, such as indisulam (E7070) or E7820, change the substrate specificity of the DCX(DCAF15) complex, leading to promote ubiquitination and degradation of splicing factor RBM39. RBM39 degradation results in splicing defects and death in cancer cell lines. Aryl sulfonamide anticancer drugs change the substrate specificity of DCAF15 by acting as a molecular glue that promotes binding between DCAF15 and weak affinity interactor RBM39. Aryl sulfonamide anticancer drugs also promote ubiquitination and degradation of RBM23 and PRPF39. The sequence is that of DDB1- and CUL4-associated factor 15 from Homo sapiens (Human).